The following is a 354-amino-acid chain: MSFYPILRGPAKQESPPPPPAPKKRRKTARACLHCQKAHLTCDEGRPCARCIKKNMGDQCVDGKRKQAKYLVGLPPTPPGQATQQKQQQQQQQQQAVQHGMGPPDTDFGSSAANLEYSILSNILGRGDTSSPPDFFPAQSPHMPSPMSIPGLHMEEEGSQTAGTPQGSPTDIYTSITKPYAYTTGFHALIAYLKSRFEKKELLDVVKSMAFYRPSFIATTQTLQYEDLVFMEKCFQRTLLEFEKYISLSGTPTVLWRRTGQIAAVGKEFCVLTMRSQADLLSQFIIECMDNKSVVQYFDVFSELAFEDSRGTITTTFGLTKPSGEVVNTACSLTIKRDVFDIPMMIVGNFLPIL.

The disordered stretch occupies residues 1–29; that stretch reads MSFYPILRGPAKQESPPPPPAPKKRRKTA. The zn(2)-C6 fungal-type DNA-binding region spans 32–60; it reads CLHCQKAHLTCDEGRPCARCIKKNMGDQC. 2 disordered regions span residues 71-111 and 128-169; these read LVGL…FGSS and DTSS…QGSP. Residues 81–98 are compositionally biased toward low complexity; it reads QATQQKQQQQQQQQQAVQ. A compositionally biased stretch (polar residues) spans 159 to 169; it reads SQTAGTPQGSP.

This sequence belongs to the ERT1/acuK family.

It is found in the nucleus. Transcription factor which regulates nonfermentable carbon utilization. Activator of gluconeogenetic genes. The sequence is that of Transcription activator of gluconeogenesis ERT1-1 (ERT1-1) from Yarrowia lipolytica (strain CLIB 122 / E 150) (Yeast).